Consider the following 89-residue polypeptide: Small ribosomal subunit protein uS14 (89 aa).

It belongs to the universal ribosomal protein uS14 family. As to quaternary structure, part of the 30S ribosomal subunit. Contacts proteins S3 and S10.

Functionally, binds 16S rRNA, required for the assembly of 30S particles and may also be responsible for determining the conformation of the 16S rRNA at the A site. The sequence is that of Small ribosomal subunit protein uS14 from Lacticaseibacillus casei (strain BL23) (Lactobacillus casei).